Reading from the N-terminus, the 257-residue chain is Acetylglutamate kinase (257 aa).

Substrate is bound by residues 43–44, R65, and N157; that span reads GG.

The protein belongs to the acetylglutamate kinase family. ArgB subfamily.

Its subcellular location is the cytoplasm. The catalysed reaction is N-acetyl-L-glutamate + ATP = N-acetyl-L-glutamyl 5-phosphate + ADP. It participates in amino-acid biosynthesis; L-arginine biosynthesis; N(2)-acetyl-L-ornithine from L-glutamate: step 2/4. Catalyzes the ATP-dependent phosphorylation of N-acetyl-L-glutamate. This Actinobacillus succinogenes (strain ATCC 55618 / DSM 22257 / CCUG 43843 / 130Z) protein is Acetylglutamate kinase.